A 391-amino-acid polypeptide reads, in one-letter code: Oxytocin receptor (391 aa).

The Extracellular segment spans residues 1 to 38 (MEGAFAANWSAEAVNGSAAPPGTEGNRTAGPPQRNEAL). N-linked (GlcNAc...) asparagine glycans are attached at residues Asn8, Asn15, and Asn26. A helical membrane pass occupies residues 39–63 (ARVEVAVLSLILFLALSGNACVLLA). The Cytoplasmic segment spans residues 64–74 (LRTTRHKHSRL). A helical membrane pass occupies residues 75-97 (FFFMKHLSIADLAVAVFQVLPQL). Topologically, residues 98 to 113 (LWDITFRFYGPDLLCR) are extracellular. A disulfide bridge links Cys112 with Cys187. The helical transmembrane segment at 114 to 135 (LVKYLQVVGMFASTYLLLLMSL) threads the bilayer. At 136 to 154 (DRCLAICQPLRSLRRRTDR) the chain is on the cytoplasmic side. The chain crosses the membrane as a helical span at residues 155–175 (LAVLATWLGCLVASAPQVHIF). Residues 176-202 (SLREVADGVFDCWAVFIQPWGPKAYIT) are Extracellular-facing. A helical membrane pass occupies residues 203–225 (WITLAVYIVPVIVLAACYGLISF). Residues 226–277 (KIWQNLRLKTEAAAAEASAGAEGAAADCAGRAALARVSNVKLISKAKIRTVK) are Cytoplasmic-facing. A helical transmembrane segment spans residues 278–296 (MTFIVVLAFIVCWTPFFFK). Residues 297–311 (QMWSVWDADAPKEAS) lie on the Extracellular side of the membrane. A helical membrane pass occupies residues 312–334 (AFIIAMLLASLNSCCNPWIYMLF). Over 335–391 (TGHLFQDLVQRFLCCSFRRLKGSQLGETSVTKKIHSYTFVLSRHSSSQRSCSQPSTV) the chain is Cytoplasmic. Phosphoserine is present on Ser370.

The protein belongs to the G-protein coupled receptor 1 family. Vasopressin/oxytocin receptor subfamily.

The protein resides in the cell membrane. Receptor for oxytocin. The activity of this receptor is mediated by G proteins which activate a phosphatidylinositol-calcium second messenger system. This chain is Oxytocin receptor (OXTR), found in Ovis aries (Sheep).